A 56-amino-acid polypeptide reads, in one-letter code: Large ribosomal subunit protein bL32 (56 aa).

Positions 1 to 26 (MAVQQNKPTRSKRGMRRSHDSLTTAA) are disordered.

This sequence belongs to the bacterial ribosomal protein bL32 family.

This chain is Large ribosomal subunit protein bL32, found in Erwinia tasmaniensis (strain DSM 17950 / CFBP 7177 / CIP 109463 / NCPPB 4357 / Et1/99).